The sequence spans 489 residues: Betaine aldehyde dehydrogenase (489 aa).

Positions 26 and 93 each coordinate K(+). 150-152 contacts NAD(+); sequence GAW. Residue Lys162 is the Charge relay system of the active site. Position 176 to 179 (176 to 179) interacts with NAD(+); that stretch reads KPSE. Position 180 (Val180) interacts with K(+). Residue 229–232 participates in NAD(+) binding; sequence GVET. Leu245 contacts K(+). Catalysis depends on Glu251, which acts as the Proton acceptor. NAD(+) is bound by residues Gly253, Cys285, and Glu386. Cys285 serves as the catalytic Nucleophile. Cys285 carries the cysteine sulfenic acid (-SOH) modification. K(+)-binding residues include Lys456 and Gly459. Glu463 functions as the Charge relay system in the catalytic mechanism.

This sequence belongs to the aldehyde dehydrogenase family. In terms of assembly, dimer of dimers. K(+) is required as a cofactor.

It catalyses the reaction betaine aldehyde + NAD(+) + H2O = glycine betaine + NADH + 2 H(+). It functions in the pathway amine and polyamine biosynthesis; betaine biosynthesis via choline pathway; betaine from betaine aldehyde: step 1/1. Its function is as follows. Involved in the biosynthesis of the osmoprotectant glycine betaine. Catalyzes the irreversible oxidation of betaine aldehyde to the corresponding acid. The chain is Betaine aldehyde dehydrogenase from Burkholderia pseudomallei (strain 1106a).